The chain runs to 763 residues: 5-methyltetrahydropteroyltriglutamate--homocysteine methyltransferase (763 aa).

Residues 16–19 (RELK) and Lys-121 each bind 5-methyltetrahydropteroyltri-L-glutamate. Residues 440–442 (IGS) and Glu-493 contribute to the L-homocysteine site. Residues 440–442 (IGS) and Glu-493 each bind L-methionine. 5-methyltetrahydropteroyltri-L-glutamate contacts are provided by residues 524–525 (RC) and Trp-570. Asp-608 serves as a coordination point for L-homocysteine. Asp-608 lines the L-methionine pocket. Residue Glu-614 coordinates 5-methyltetrahydropteroyltri-L-glutamate. Zn(2+) contacts are provided by His-650, Cys-652, and Glu-674. Residue His-703 is the Proton donor of the active site. Cys-735 lines the Zn(2+) pocket.

The protein belongs to the vitamin-B12 independent methionine synthase family. Zn(2+) is required as a cofactor.

It catalyses the reaction 5-methyltetrahydropteroyltri-L-glutamate + L-homocysteine = tetrahydropteroyltri-L-glutamate + L-methionine. It participates in amino-acid biosynthesis; L-methionine biosynthesis via de novo pathway; L-methionine from L-homocysteine (MetE route): step 1/1. In terms of biological role, catalyzes the transfer of a methyl group from 5-methyltetrahydrofolate to homocysteine resulting in methionine formation. This is 5-methyltetrahydropteroyltriglutamate--homocysteine methyltransferase from Paraburkholderia phymatum (strain DSM 17167 / CIP 108236 / LMG 21445 / STM815) (Burkholderia phymatum).